The sequence spans 356 residues: Phosphate acyltransferase (356 aa).

Belongs to the PlsX family. As to quaternary structure, homodimer. Probably interacts with PlsY.

Its subcellular location is the cytoplasm. It carries out the reaction a fatty acyl-[ACP] + phosphate = an acyl phosphate + holo-[ACP]. Its pathway is lipid metabolism; phospholipid metabolism. Its function is as follows. Catalyzes the reversible formation of acyl-phosphate (acyl-PO(4)) from acyl-[acyl-carrier-protein] (acyl-ACP). This enzyme utilizes acyl-ACP as fatty acyl donor, but not acyl-CoA. The polypeptide is Phosphate acyltransferase (Xanthobacter autotrophicus (strain ATCC BAA-1158 / Py2)).